The chain runs to 152 residues: Xanthine-guanine phosphoribosyltransferase (152 aa).

Residues 37 to 38 (RG) and 88 to 96 (DDLVDTGNT) each bind 5-phospho-alpha-D-ribose 1-diphosphate. Asp-89 is a Mg(2+) binding site. The guanine site is built by Asp-92 and Ile-135. 2 residues coordinate xanthine: Asp-92 and Ile-135. GMP contacts are provided by residues 92-96 (DTGNT) and 134-135 (WI).

It belongs to the purine/pyrimidine phosphoribosyltransferase family. XGPT subfamily. As to quaternary structure, homotetramer. Requires Mg(2+) as cofactor.

Its subcellular location is the cell inner membrane. The enzyme catalyses GMP + diphosphate = guanine + 5-phospho-alpha-D-ribose 1-diphosphate. The catalysed reaction is XMP + diphosphate = xanthine + 5-phospho-alpha-D-ribose 1-diphosphate. It catalyses the reaction IMP + diphosphate = hypoxanthine + 5-phospho-alpha-D-ribose 1-diphosphate. It functions in the pathway purine metabolism; GMP biosynthesis via salvage pathway; GMP from guanine: step 1/1. The protein operates within purine metabolism; XMP biosynthesis via salvage pathway; XMP from xanthine: step 1/1. Functionally, purine salvage pathway enzyme that catalyzes the transfer of the ribosyl-5-phosphate group from 5-phospho-alpha-D-ribose 1-diphosphate (PRPP) to the N9 position of the 6-oxopurines guanine and xanthine to form the corresponding ribonucleotides GMP (guanosine 5'-monophosphate) and XMP (xanthosine 5'-monophosphate), with the release of PPi. To a lesser extent, also acts on hypoxanthine. This is Xanthine-guanine phosphoribosyltransferase from Actinobacillus succinogenes (strain ATCC 55618 / DSM 22257 / CCUG 43843 / 130Z).